The following is a 141-amino-acid chain: VLSAADKTHVKAFWGKVGGHAAEFGAEALERMFASFPPTKTYFSHMDLSHGSAQVKAHGKKVADALTLAVGHLDDLPGALSTLSDLHAHKLRVDPVNFKFLSHCLLVTLACHLPDDFTPAVHASMDKFMAGVSTVLVSKYR.

The Globin domain maps to V1–R141. Residue S3 is modified to Phosphoserine. Residue K7 is modified to N6-succinyllysine. T8 bears the Phosphothreonine mark. K11 carries the post-translational modification N6-succinyllysine. K16 is subject to N6-acetyllysine; alternate. An N6-succinyllysine; alternate modification is found at K16. The residue at position 35 (S35) is a Phosphoserine. K40 carries the N6-succinyllysine modification. S49 is subject to Phosphoserine. O2 is bound at residue H58. H87 is a binding site for heme b. The residue at position 102 (S102) is a Phosphoserine. T108 carries the post-translational modification Phosphothreonine. S124 is subject to Phosphoserine. T134 carries the phosphothreonine modification. At S138 the chain carries Phosphoserine.

The protein belongs to the globin family. Heterotetramer of two alpha chains and two beta chains. In terms of tissue distribution, red blood cells.

Involved in oxygen transport from the lung to the various peripheral tissues. Its function is as follows. Hemopressin acts as an antagonist peptide of the cannabinoid receptor CNR1. Hemopressin-binding efficiently blocks cannabinoid receptor CNR1 and subsequent signaling. The chain is Hemoglobin subunit alpha (HBA) from Dasypus novemcinctus (Nine-banded armadillo).